The sequence spans 432 residues: Trigger factor (432 aa).

A PPIase FKBP-type domain is found at 161–246 (EDRVTIDFTG…LKKVEERELP (86 aa)).

The protein belongs to the FKBP-type PPIase family. Tig subfamily.

The protein resides in the cytoplasm. It catalyses the reaction [protein]-peptidylproline (omega=180) = [protein]-peptidylproline (omega=0). Its function is as follows. Involved in protein export. Acts as a chaperone by maintaining the newly synthesized protein in an open conformation. Functions as a peptidyl-prolyl cis-trans isomerase. The protein is Trigger factor of Klebsiella pneumoniae subsp. pneumoniae (strain ATCC 700721 / MGH 78578).